A 173-amino-acid polypeptide reads, in one-letter code: uncharacterized protein (173 aa).

In terms of domain architecture, N-acetyltransferase spans 4-173; that stretch reads VKIVQVSEKD…TDFLLKKALV (170 aa). Acetyl-CoA is bound by residues 97-99, 106-110, and 136-138; these read IYL, RGLGK, and NEN.

This is an uncharacterized protein from Lactobacillus delbrueckii subsp. lactis.